A 569-amino-acid chain; its full sequence is Glutamate--tRNA ligase (569 aa).

The 'HIGH' region signature appears at 99–109 (PEPNGYPTLGH).

It belongs to the class-I aminoacyl-tRNA synthetase family. Glutamate--tRNA ligase type 2 subfamily.

It is found in the cytoplasm. The enzyme catalyses tRNA(Glu) + L-glutamate + ATP = L-glutamyl-tRNA(Glu) + AMP + diphosphate. Its function is as follows. Catalyzes the attachment of glutamate to tRNA(Glu) in a two-step reaction: glutamate is first activated by ATP to form Glu-AMP and then transferred to the acceptor end of tRNA(Glu). The protein is Glutamate--tRNA ligase of Korarchaeum cryptofilum (strain OPF8).